The sequence spans 136 residues: Neuropeptide CCHamide-2 (136 aa).

An N-terminal signal peptide occupies residues 1–24 (MKSTISLLLVVICTVVLAAQQSQA). Cys-28 and Cys-35 are joined by a disulfide. The residue at position 39 (His-39) is a Histidine amide. Residues 42–78 (RSLSPGSGSGTGVGGGMGEAASGGQEPDYVRPNGLLP) form a disordered region. Residues 43-136 (SLSPGSGSGT…ANSAELNGVN (94 aa)) constitute a propeptide that is removed on maturation. A compositionally biased stretch (gly residues) spans 48–59 (SGSGTGVGGGMG).

In terms of tissue distribution, expressed in endocrine cells of the larval midgut (at protein level). Also expressed in endocrine cells of the midgut of adult males and females (at protein level). In the midgut, expression occurs mainly in the anterior region (at protein level). In the larval central nervous system, expressed in about 40 neurons in the brain hemispheres and ventral nerve cord (at protein level). Highly expressed in larval and adult gut with low levels in larval and adult brain. Very little expression in the larval fat body. However, another study shows high levels of expression in the larval fat body as well as the larval gut with low levels in the larval central nervous system.

The protein resides in the secreted. Functionally, ligand for the CCHamide-2 receptor CCHa2-R. In one study, shown to be an orexigenic peptide which induces appetite and stimulates food intake, leading to the release of insulin-like peptides which stimulate growth. In another study, shown to be a nutrient-sensitive peptide derived from peripheral tissues which controls growth by directly regulating the production and release of insulin-like peptides. This chain is Neuropeptide CCHamide-2, found in Drosophila melanogaster (Fruit fly).